The chain runs to 243 residues: ATP synthase subunit a (243 aa).

Helical transmembrane passes span 29-49, 54-74, 89-109, 114-134, 144-164, 182-202, and 208-228; these read NASL…YIGL, IIPN…VSTI, VFTI…PLGF, HIAV…IIGF, ILLP…IELF, IAGH…NIFL, and IFII…AYIF.

It belongs to the ATPase A chain family. As to quaternary structure, F-type ATPases have 2 components, CF(1) - the catalytic core - and CF(0) - the membrane proton channel. CF(1) has five subunits: alpha(3), beta(3), gamma(1), delta(1), epsilon(1). CF(0) has three main subunits: a(1), b(2) and c(9-12). The alpha and beta chains form an alternating ring which encloses part of the gamma chain. CF(1) is attached to CF(0) by a central stalk formed by the gamma and epsilon chains, while a peripheral stalk is formed by the delta and b chains.

The protein resides in the cell inner membrane. In terms of biological role, key component of the proton channel; it plays a direct role in the translocation of protons across the membrane. The chain is ATP synthase subunit a from Ehrlichia canis (strain Jake).